Consider the following 90-residue polypeptide: Acylphosphatase (90 aa).

In terms of domain architecture, Acylphosphatase-like spans 4 to 90 (CVRVRVSGRV…KGHDDFKIIY (87 aa)). Residues R19 and N37 contribute to the active site.

This sequence belongs to the acylphosphatase family.

It carries out the reaction an acyl phosphate + H2O = a carboxylate + phosphate + H(+). The polypeptide is Acylphosphatase (acyP) (Methanothrix thermoacetophila (strain DSM 6194 / JCM 14653 / NBRC 101360 / PT) (Methanosaeta thermophila)).